Consider the following 393-residue polypeptide: Cysteine protease ATG4B (393 aa).

The active-site Nucleophile is C73. Residues D278 and H280 contribute to the active site. Positions 388-391 match the LIR motif; it reads FEIL.

The protein belongs to the peptidase C54 family.

It localises to the cytoplasm. It is found in the cytosol. The protein localises to the cytoplasmic vesicle. The protein resides in the autophagosome. Its subcellular location is the endoplasmic reticulum. It localises to the mitochondrion. It catalyses the reaction [protein]-C-terminal L-amino acid-glycyl-phosphatidylethanolamide + H2O = [protein]-C-terminal L-amino acid-glycine + a 1,2-diacyl-sn-glycero-3-phosphoethanolamine. The catalysed reaction is [protein]-C-terminal L-amino acid-glycyl-phosphatidylserine + H2O = [protein]-C-terminal L-amino acid-glycine + a 1,2-diacyl-sn-glycero-3-phospho-L-serine. Cysteine protease that plays a key role in autophagy by mediating both proteolytic activation and delipidation of ATG8 family proteins. Required for canonical autophagy (macroautophagy), non-canonical autophagy as well as for mitophagy. The protease activity is required for proteolytic activation of ATG8 family proteins: cleaves the C-terminal amino acid of ATG8 proteins to reveal a C-terminal glycine. Exposure of the glycine at the C-terminus is essential for ATG8 proteins conjugation to phosphatidylethanolamine (PE) and insertion to membranes, which is necessary for autophagy. Protease activity is also required to counteract formation of high-molecular weight conjugates of ATG8 proteins (ATG8ylation): acts as a deubiquitinating-like enzyme that removes ATG8 conjugated to other proteins, such as ATG3. In addition to the protease activity, also mediates delipidation of ATG8 family proteins. Catalyzes delipidation of PE-conjugated forms of ATG8 proteins during macroautophagy. Also involved in non-canonical autophagy, a parallel pathway involving conjugation of ATG8 proteins to single membranes at endolysosomal compartments, by catalyzing delipidation of ATG8 proteins conjugated to phosphatidylserine (PS). The sequence is that of Cysteine protease ATG4B from Gallus gallus (Chicken).